Consider the following 276-residue polypeptide: MIEIKNLKFKYNQDQTSYTLNDVSFHVKHGEWLSIVGHNGSGKSTTARLIGGLLVADSGQIIVDGQELTEETVWDIRDKIGMVFQNPDNQFVGATVEDDVAFGLENKGLPYKEMVSRVQEALSFVGMMDFKDREPARLSGGQKQRVAIAGIIAMRPSILILDEATSMLDPEGRQELIQYIEDIRQQYGMTVLSITHDLDEVAMSNRVLVLKQGKVESISSPRELFSRGSELVDLGLDIPFSALLTQKLKNQGLIDCEGYLTEKELVEQLWEYLSKM.

One can recognise an ABC transporter domain in the interval 2 to 237 (IEIKNLKFKY…GSELVDLGLD (236 aa)). 37–44 (GHNGSGKS) provides a ligand contact to ATP.

The protein belongs to the ABC transporter superfamily. Energy-coupling factor EcfA family. Forms a stable energy-coupling factor (ECF) transporter complex composed of 2 membrane-embedded substrate-binding proteins (S component), 2 ATP-binding proteins (A component) and 2 transmembrane proteins (T component).

Its subcellular location is the cell membrane. In terms of biological role, ATP-binding (A) component of a common energy-coupling factor (ECF) ABC-transporter complex. Unlike classic ABC transporters this ECF transporter provides the energy necessary to transport a number of different substrates. The polypeptide is Energy-coupling factor transporter ATP-binding protein EcfA1 (Streptococcus thermophilus (strain CNRZ 1066)).